A 115-amino-acid chain; its full sequence is Colicin-Ib immunity protein (115 aa).

3 helical membrane-spanning segments follow: residues 7–27, 38–58, and 87–107; these read VKYL…FYLG, FYAF…MRII, and IFEL…LIFI.

It localises to the cell membrane. This protein is able to protect a cell, which harbors the plasmid IncI1 ColIb-P9 encoding colicin Ib, against colicin Ib. This Escherichia coli protein is Colicin-Ib immunity protein.